We begin with the raw amino-acid sequence, 560 residues long: DNA ligase B (560 aa).

Lys-124 acts as the N6-AMP-lysine intermediate in catalysis.

This sequence belongs to the NAD-dependent DNA ligase family. LigB subfamily.

It catalyses the reaction NAD(+) + (deoxyribonucleotide)n-3'-hydroxyl + 5'-phospho-(deoxyribonucleotide)m = (deoxyribonucleotide)n+m + AMP + beta-nicotinamide D-nucleotide.. Functionally, catalyzes the formation of phosphodiester linkages between 5'-phosphoryl and 3'-hydroxyl groups in double-stranded DNA using NAD as a coenzyme and as the energy source for the reaction. The chain is DNA ligase B from Shigella sonnei (strain Ss046).